Here is a 271-residue protein sequence, read N- to C-terminus: Putative pyruvate, phosphate dikinase regulatory protein 2 (271 aa).

Residue G151–T158 coordinates ADP.

The protein belongs to the pyruvate, phosphate/water dikinase regulatory protein family. PDRP subfamily.

The catalysed reaction is N(tele)-phospho-L-histidyl/L-threonyl-[pyruvate, phosphate dikinase] + ADP = N(tele)-phospho-L-histidyl/O-phospho-L-threonyl-[pyruvate, phosphate dikinase] + AMP + H(+). The enzyme catalyses N(tele)-phospho-L-histidyl/O-phospho-L-threonyl-[pyruvate, phosphate dikinase] + phosphate + H(+) = N(tele)-phospho-L-histidyl/L-threonyl-[pyruvate, phosphate dikinase] + diphosphate. Bifunctional serine/threonine kinase and phosphorylase involved in the regulation of the pyruvate, phosphate dikinase (PPDK) by catalyzing its phosphorylation/dephosphorylation. This chain is Putative pyruvate, phosphate dikinase regulatory protein 2, found in Staphylococcus haemolyticus (strain JCSC1435).